A 406-amino-acid polypeptide reads, in one-letter code: Phosphopentomutase (406 aa).

6 residues coordinate Mn(2+): Asp-10, Asp-305, His-310, Asp-346, His-347, and His-358.

The protein belongs to the phosphopentomutase family. The cofactor is Mn(2+).

The protein resides in the cytoplasm. It catalyses the reaction 2-deoxy-alpha-D-ribose 1-phosphate = 2-deoxy-D-ribose 5-phosphate. The enzyme catalyses alpha-D-ribose 1-phosphate = D-ribose 5-phosphate. Its pathway is carbohydrate degradation; 2-deoxy-D-ribose 1-phosphate degradation; D-glyceraldehyde 3-phosphate and acetaldehyde from 2-deoxy-alpha-D-ribose 1-phosphate: step 1/2. Its function is as follows. Isomerase that catalyzes the conversion of deoxy-ribose 1-phosphate (dRib-1-P) and ribose 1-phosphate (Rib-1-P) to deoxy-ribose 5-phosphate (dRib-5-P) and ribose 5-phosphate (Rib-5-P), respectively. The chain is Phosphopentomutase from Rhizobium etli (strain ATCC 51251 / DSM 11541 / JCM 21823 / NBRC 15573 / CFN 42).